The primary structure comprises 209 residues: ATP-dependent Clp protease proteolytic subunit (209 aa).

The Nucleophile role is filled by Ser-111. His-136 is an active-site residue.

Belongs to the peptidase S14 family. As to quaternary structure, fourteen ClpP subunits assemble into 2 heptameric rings which stack back to back to give a disk-like structure with a central cavity, resembling the structure of eukaryotic proteasomes.

It localises to the cytoplasm. It carries out the reaction Hydrolysis of proteins to small peptides in the presence of ATP and magnesium. alpha-casein is the usual test substrate. In the absence of ATP, only oligopeptides shorter than five residues are hydrolyzed (such as succinyl-Leu-Tyr-|-NHMec, and Leu-Tyr-Leu-|-Tyr-Trp, in which cleavage of the -Tyr-|-Leu- and -Tyr-|-Trp bonds also occurs).. Its function is as follows. Cleaves peptides in various proteins in a process that requires ATP hydrolysis. Has a chymotrypsin-like activity. Plays a major role in the degradation of misfolded proteins. This chain is ATP-dependent Clp protease proteolytic subunit, found in Dechloromonas aromatica (strain RCB).